A 255-amino-acid polypeptide reads, in one-letter code: Type III pantothenate kinase (255 aa).

6-13 (DVGNTNTV) contacts ATP. Substrate-binding positions include Y100 and 107-110 (GADR). D109 functions as the Proton acceptor in the catalytic mechanism. K(+) is bound at residue D129. T132 contributes to the ATP binding site. Residue T184 participates in substrate binding.

This sequence belongs to the type III pantothenate kinase family. Homodimer. Requires NH4(+) as cofactor. K(+) serves as cofactor.

It is found in the cytoplasm. It carries out the reaction (R)-pantothenate + ATP = (R)-4'-phosphopantothenate + ADP + H(+). It participates in cofactor biosynthesis; coenzyme A biosynthesis; CoA from (R)-pantothenate: step 1/5. In terms of biological role, catalyzes the phosphorylation of pantothenate (Pan), the first step in CoA biosynthesis. The sequence is that of Type III pantothenate kinase from Syntrophomonas wolfei subsp. wolfei (strain DSM 2245B / Goettingen).